Consider the following 259-residue polypeptide: Proteasome subunit alpha (259 aa).

The protein belongs to the peptidase T1A family. As to quaternary structure, the 20S proteasome core is composed of 14 alpha and 14 beta subunits that assemble into four stacked heptameric rings, resulting in a barrel-shaped structure. The two inner rings, each composed of seven catalytic beta subunits, are sandwiched by two outer rings, each composed of seven alpha subunits. The catalytic chamber with the active sites is on the inside of the barrel. Has a gated structure, the ends of the cylinder being occluded by the N-termini of the alpha-subunits. Is capped at one or both ends by the proteasome regulatory ATPase, PAN.

Its subcellular location is the cytoplasm. With respect to regulation, the formation of the proteasomal ATPase PAN-20S proteasome complex, via the docking of the C-termini of PAN into the intersubunit pockets in the alpha-rings, triggers opening of the gate for substrate entry. Interconversion between the open-gate and close-gate conformations leads to a dynamic regulation of the 20S proteasome proteolysis activity. Functionally, component of the proteasome core, a large protease complex with broad specificity involved in protein degradation. This Methanococcus maripaludis (strain DSM 14266 / JCM 13030 / NBRC 101832 / S2 / LL) protein is Proteasome subunit alpha.